A 208-amino-acid polypeptide reads, in one-letter code: Probable GTP-binding protein EngB (208 aa).

The region spanning Thr-25–Gly-199 is the EngB-type G domain. GTP-binding positions include Gly-33 to Ser-40, Gly-60 to Leu-64, Asp-78 to Gly-81, Thr-145 to Asp-148, and Phe-178 to Ser-180. The Mg(2+) site is built by Ser-40 and Thr-62.

This sequence belongs to the TRAFAC class TrmE-Era-EngA-EngB-Septin-like GTPase superfamily. EngB GTPase family. The cofactor is Mg(2+).

Necessary for normal cell division and for the maintenance of normal septation. This Enterobacter sp. (strain 638) protein is Probable GTP-binding protein EngB.